The following is a 179-amino-acid chain: Probable chorismate pyruvate-lyase (179 aa).

Arginine 82, leucine 120, and glutamate 165 together coordinate substrate.

This sequence belongs to the UbiC family.

It localises to the cytoplasm. It carries out the reaction chorismate = 4-hydroxybenzoate + pyruvate. The protein operates within cofactor biosynthesis; ubiquinone biosynthesis. Its function is as follows. Removes the pyruvyl group from chorismate, with concomitant aromatization of the ring, to provide 4-hydroxybenzoate (4HB) for the ubiquinone pathway. The polypeptide is Probable chorismate pyruvate-lyase (Vibrio vulnificus (strain CMCP6)).